The chain runs to 473 residues: Photosystem II CP43 reaction center protein (473 aa).

Residues 1 to 14 (MKTLYSLRRFYPVE) constitute a propeptide that is removed on maturation. T15 is modified (N-acetylthreonine). At T15 the chain carries Phosphothreonine. 5 helical membrane passes run 69 to 93 (LFEV…PHLA), 134 to 155 (LLGP…KDRN), 178 to 200 (KALY…RKIT), 255 to 275 (KPFA…LSYS), and 291 to 312 (WFNN…ASQA). E367 provides a ligand contact to [CaMn4O5] cluster. A helical membrane pass occupies residues 447-471 (RARAAAAGFEKGIDRDFEPVLSMTP).

It belongs to the PsbB/PsbC family. PsbC subfamily. As to quaternary structure, PSII is composed of 1 copy each of membrane proteins PsbA, PsbB, PsbC, PsbD, PsbE, PsbF, PsbH, PsbI, PsbJ, PsbK, PsbL, PsbM, PsbT, PsbX, PsbY, PsbZ, Psb30/Ycf12, at least 3 peripheral proteins of the oxygen-evolving complex and a large number of cofactors. It forms dimeric complexes. Binds multiple chlorophylls and provides some of the ligands for the Ca-4Mn-5O cluster of the oxygen-evolving complex. It may also provide a ligand for a Cl- that is required for oxygen evolution. PSII binds additional chlorophylls, carotenoids and specific lipids. serves as cofactor.

The protein resides in the plastid. The protein localises to the chloroplast thylakoid membrane. In terms of biological role, one of the components of the core complex of photosystem II (PSII). It binds chlorophyll and helps catalyze the primary light-induced photochemical processes of PSII. PSII is a light-driven water:plastoquinone oxidoreductase, using light energy to abstract electrons from H(2)O, generating O(2) and a proton gradient subsequently used for ATP formation. The protein is Photosystem II CP43 reaction center protein of Morus indica (Mulberry).